We begin with the raw amino-acid sequence, 516 residues long: 3-phosphoshikimate 1-carboxyvinyltransferase, chloroplastic (516 aa).

The N-terminal 72 residues, 1 to 72 (MAQINNMAQG…RISASVATAQ (72 aa)), are a transit peptide targeting the chloroplast. 3-phosphoshikimate is bound by residues K95, S96, and R100. K95 is a binding site for phosphoenolpyruvate. Residues G173 and R203 each contribute to the phosphoenolpyruvate site. Positions 250, 251, 252, 278, 403, and 430 each coordinate 3-phosphoshikimate. Residue Q252 coordinates phosphoenolpyruvate. Catalysis depends on D403, which acts as the Proton acceptor. R434, R476, and K501 together coordinate phosphoenolpyruvate.

It belongs to the EPSP synthase family. In terms of tissue distribution, mostly expressed in flower petals, and, to a lower extent, in roots, stems and anthers, but barely in leaves.

The protein resides in the plastid. It localises to the chloroplast. The enzyme catalyses 3-phosphoshikimate + phosphoenolpyruvate = 5-O-(1-carboxyvinyl)-3-phosphoshikimate + phosphate. It participates in metabolic intermediate biosynthesis; chorismate biosynthesis; chorismate from D-erythrose 4-phosphate and phosphoenolpyruvate: step 6/7. Competitively inhibited by glyphosate. Functionally, catalyzes the transfer of the enolpyruvyl moiety of phosphoenolpyruvate (PEP) to the 5-hydroxyl of shikimate-3-phosphate (S3P) to produce enolpyruvyl shikimate-3-phosphate and inorganic phosphate. Involved in the accumulation of volatile benzoides in flowers, scent attracting pollinators (e.g. the night-active hawkmoth pollinator Manduca sexta). In Petunia hybrida (Petunia), this protein is 3-phosphoshikimate 1-carboxyvinyltransferase, chloroplastic.